A 497-amino-acid chain; its full sequence is Probable cytosol aminopeptidase (497 aa).

Mn(2+)-binding residues include lysine 263 and aspartate 268. Lysine 275 is an active-site residue. Mn(2+)-binding residues include aspartate 286, aspartate 345, and glutamate 347. Arginine 349 is a catalytic residue.

This sequence belongs to the peptidase M17 family. Mn(2+) is required as a cofactor.

It is found in the cytoplasm. The catalysed reaction is Release of an N-terminal amino acid, Xaa-|-Yaa-, in which Xaa is preferably Leu, but may be other amino acids including Pro although not Arg or Lys, and Yaa may be Pro. Amino acid amides and methyl esters are also readily hydrolyzed, but rates on arylamides are exceedingly low.. It carries out the reaction Release of an N-terminal amino acid, preferentially leucine, but not glutamic or aspartic acids.. Its function is as follows. Presumably involved in the processing and regular turnover of intracellular proteins. Catalyzes the removal of unsubstituted N-terminal amino acids from various peptides. This is Probable cytosol aminopeptidase from Brucella suis biovar 1 (strain 1330).